A 310-amino-acid chain; its full sequence is MKIFGITMGDPAGIGPELILKLQKDMEDENAYVIYGEEYILKHASSVLGQNFYYEKVNSVDDVKDKGIYLISLSLKGALEPSPSSGKLAIAYLARATADAISKKLNGILTMPINKYFAKASGFSFNGQTEYLAFADNKKDFAMMMYSDAIKVVLATIHIPLKDIANAINVELIKQKIKLIKDYIPKYFRFIPTIKVLGLNPHAGEGGLIGDEEAKIIIPAIRDEDVVGPIPPDTAFIDIKKDDIFLCMYHDQGLIPFKMLAFDKGSNVTIGLSFLRTSPDHGTAYDIAYKGLARVDSAGYSLELLKRYGY.

Residue threonine 129 coordinates substrate. Residues histidine 158, histidine 202, and histidine 250 each contribute to the a divalent metal cation site. Positions 258, 267, and 276 each coordinate substrate.

This sequence belongs to the PdxA family. As to quaternary structure, homodimer. A divalent metal cation serves as cofactor.

The protein localises to the cytoplasm. It carries out the reaction 4-(phosphooxy)-L-threonine + NAD(+) = 3-amino-2-oxopropyl phosphate + CO2 + NADH. Its pathway is cofactor biosynthesis; pyridoxine 5'-phosphate biosynthesis; pyridoxine 5'-phosphate from D-erythrose 4-phosphate: step 4/5. Catalyzes the NAD(P)-dependent oxidation of 4-(phosphooxy)-L-threonine (HTP) into 2-amino-3-oxo-4-(phosphooxy)butyric acid which spontaneously decarboxylates to form 3-amino-2-oxopropyl phosphate (AHAP). The chain is 4-hydroxythreonine-4-phosphate dehydrogenase from Hydrogenobaculum sp. (strain Y04AAS1).